Reading from the N-terminus, the 178-residue chain is RNA pyrophosphohydrolase (178 aa).

One can recognise a Nudix hydrolase domain in the interval 18-171 (PYRPCVGLMV…KRKVYEQVVA (154 aa)). Positions 59–80 (GGIDKGEDPAQAALRELYEETG) match the Nudix box motif.

Belongs to the Nudix hydrolase family. RppH subfamily. A divalent metal cation is required as a cofactor.

In terms of biological role, accelerates the degradation of transcripts by removing pyrophosphate from the 5'-end of triphosphorylated RNA, leading to a more labile monophosphorylated state that can stimulate subsequent ribonuclease cleavage. The polypeptide is RNA pyrophosphohydrolase (Brucella canis (strain ATCC 23365 / NCTC 10854 / RM-666)).